Reading from the N-terminus, the 184-residue chain is uncharacterized protein (184 aa).

The chain crosses the membrane as a helical span at residues 5 to 27 (YLLATAMFLIVCVYVISETVNLH).

The protein localises to the membrane. This is an uncharacterized protein from Methanocaldococcus jannaschii (strain ATCC 43067 / DSM 2661 / JAL-1 / JCM 10045 / NBRC 100440) (Methanococcus jannaschii).